We begin with the raw amino-acid sequence, 624 residues long: MFARGSRRRRSGRAPPEAEDPARGQPCNSCREQCPGFLLHGWRKICQHCKCPREEHAVRTVPVDLERIMCRLISDFQRHSISDDDSGCASEEYAWVPPGLKPEQVYQFFSCLPEDKVPYVNSPGEKYRIKQLLHQLPPHDSEAQYCTALEEEEKKELRAFSQQRKRENLGRATVRIFPVTITGAICEECGKQIGGGDIAVFASRAGLGACWHPQCFVCTTCQELLVDLIYFYHAGKVYCGRHHAECLRPRCQACDEIIFSPECTEAEGRHWHMGHFCCFECEASLGGQRYVMRQSRPHCCACYEARHAEYCDGCGEHIGLDQGQMAYEGQHWHASDRCFCCSRCSRPLLGRPFLPRRGLIFCSRACSLGSETTAPGPGRRSWSAGTVTTPLTTSTASFSATEGTSETASKGTCTKAEPAAGPEEPSHFLRGAPHRHSMPELGLRSAPEPPTESPGHPAPHPDDNAFGRQSTPRVSFRDPLVSEGGPRRTLSAPPAQRRRPRSPPPRTPSCHHHHHHRRRRQRHRRRGSHHHHHHPGRHGHHRCDLGSGSDSGSCSSSPSSPSSESSEDDGFFLGERIPLPPHLCRPRTTQDTSTETFNSPAQPLVQESHPVMPRQTRDKNCIVA.

A compositionally biased stretch (basic residues) spans 1-12 (MFARGSRRRRSG). The interval 1 to 26 (MFARGSRRRRSGRAPPEAEDPARGQP) is disordered. One can recognise a PET domain in the interval 74 to 182 (SDFQRHSISD…TVRIFPVTIT (109 aa)). LIM zinc-binding domains follow at residues 184-249 (AICE…CLRP), 250-309 (RCQA…RHAE), and 310-373 (YCDG…SETT). The disordered stretch occupies residues 371 to 617 (ETTAPGPGRR…SHPVMPRQTR (247 aa)). Residues 383-409 (SAGTVTTPLTTSTASFSATEGTSETAS) are compositionally biased toward low complexity. The span at 447-458 (PEPPTESPGHPA) shows a compositional bias: pro residues. A phosphoserine mark is found at Ser475 and Ser491. The segment covering 509-541 (SCHHHHHHRRRRQRHRRRGSHHHHHHPGRHGHH) has biased composition (basic residues). A compositionally biased stretch (low complexity) spans 545-564 (LGSGSDSGSCSSSPSSPSSE). Positions 587-601 (RTTQDTSTETFNSPA) are enriched in polar residues.

This sequence belongs to the prickle / espinas / testin family. As to quaternary structure, interacts with VANGL2 via its C-terminus. The VANGL2-dependent membrane recruitment of PRICKLE3 is a prerequisite for its polarization. Interacts with WTIP. WTIP is involved in the recruitment of PRICKLE3 to the basal body. Interacts with MT-ATP8, a component of the mitochondrial complex V. In terms of tissue distribution, widely expressed.

Its subcellular location is the cytoplasm. It is found in the cell membrane. The protein localises to the mitochondrion. In terms of biological role, involved in the planar cell polarity (PCP) pathway that is essential for the polarization of epithelial cells during morphogenetic processes, including gastrulation and neurulation. PCP is maintained by two molecular modules, the global and the core modules, PRICKLE3 being part of the core module. Distinct complexes of the core module segregate to opposite sides of the cell, where they interact with the opposite complex in the neighboring cell at or near the adherents junctions. Involved in the organization of the basal body. Involved in cilia growth and positioning. Required for proper assembly, stability, and function of mitochondrial membrane ATP synthase (mitochondrial complex V). The sequence is that of Prickle planar cell polarity protein 3 from Mus musculus (Mouse).